Reading from the N-terminus, the 536-residue chain is CTP synthase (536 aa).

The interval 1–267 (MTKYIFVTGG…DQIVCDHLKL (267 aa)) is amidoligase domain. A CTP-binding site is contributed by S13. Position 13 (S13) interacts with UTP. 14–19 (SIGKGI) provides a ligand contact to ATP. Y54 contributes to the L-glutamine binding site. ATP is bound at residue D71. Mg(2+) contacts are provided by D71 and E141. CTP contacts are provided by residues 148–150 (DIE), 188–193 (KTKPTQ), and K224. Residues 188 to 193 (KTKPTQ) and K224 contribute to the UTP site. The Glutamine amidotransferase type-1 domain occupies 292 to 535 (KIALVGKYVE…ITAAVENSQA (244 aa)). G354 is an L-glutamine binding site. C381 serves as the catalytic Nucleophile; for glutamine hydrolysis. L-glutamine-binding positions include 382 to 385 (LGMQ), E405, and R463. Residues H508 and E510 contribute to the active site.

It belongs to the CTP synthase family. In terms of assembly, homotetramer.

It catalyses the reaction UTP + L-glutamine + ATP + H2O = CTP + L-glutamate + ADP + phosphate + 2 H(+). The enzyme catalyses L-glutamine + H2O = L-glutamate + NH4(+). The catalysed reaction is UTP + NH4(+) + ATP = CTP + ADP + phosphate + 2 H(+). It functions in the pathway pyrimidine metabolism; CTP biosynthesis via de novo pathway; CTP from UDP: step 2/2. Allosterically activated by GTP, when glutamine is the substrate; GTP has no effect on the reaction when ammonia is the substrate. The allosteric effector GTP functions by stabilizing the protein conformation that binds the tetrahedral intermediate(s) formed during glutamine hydrolysis. Inhibited by the product CTP, via allosteric rather than competitive inhibition. In terms of biological role, catalyzes the ATP-dependent amination of UTP to CTP with either L-glutamine or ammonia as the source of nitrogen. Regulates intracellular CTP levels through interactions with the four ribonucleotide triphosphates. The sequence is that of CTP synthase from Streptococcus mutans serotype c (strain ATCC 700610 / UA159).